The chain runs to 820 residues: Crinkler effector protein 108 (820 aa).

Positions 1-17 (MVKLYCAVVGVAGSAFS) are cleaved as a signal peptide. The LQLFLAK domain stretch occupies residues 18-55 (VRVDESDTVDDLKDAIKAKKPNDFKDIDADKLELYVAK). Residues 58–111 (GVWLTEADVKSGVADITGLVRLEVVRAKLFSVGLSDEVVSEVDAQEEAAGRGPV) form a DWL domain region. An HVLVXXP motif motif is present at residues 112–117 (NVLVVV). The Host nuclear localization signal motif lies at 118–124 (PMKKRRV). The C-terminal DC effector domain stretch occupies residues 125–820 (DAGVDEERRF…MHYDDDEADL (696 aa)). N-linked (GlcNAc...) asparagine glycans are attached at residues Asn268, Asn371, and Asn703. Positions 754 to 791 (NINTASFHELRRLEGVGDATAAKIIAERTIRRFSNLED) are hhH DNA-binding domain.

This sequence belongs to the Crinkler effector family.

The protein localises to the secreted. The protein resides in the host nucleus. In terms of biological role, secreted effector that suppresses plant basal defense and promotes plant susceptibility via targeting promoters of host HSP gene and thus inhibiting their expression. CRN108 binds directly to heat shock elements (HSEs) 5'-GAAnnTTC-3' and interferes with the association of the HSE with the plant heat shock transcription factors, which initializes HSP gene expression in response to stress. This is Crinkler effector protein 108 from Phytophthora sojae (Soybean stem and root rot agent).